A 171-amino-acid chain; its full sequence is tRNA-splicing endonuclease subunit Sen15 (171 aa).

Residues 1–35 (MEERGDSEPTPGCSGLGPGGVRGFGDGGGAPSWAP) form a disordered region. Residue Ser-7 is modified to Phosphoserine. The segment covering 14-30 (SGLGPGGVRGFGDGGGA) has biased composition (gly residues). Ser-168 carries the post-translational modification Phosphoserine.

It belongs to the SEN15 family. As to quaternary structure, homodimer. tRNA splicing endonuclease is a heterotetramer composed of TSEN2, TSEN15, TSEN34/LENG5 and TSEN54. tRNA splicing endonuclease complex also contains proteins of the Pre-mRNA 3' end processing machinery, such as CLP1, CPSF1, CPSF4 and CSTF2. In terms of tissue distribution, widely expressed. Highly expressed in testis and uterus.

The protein resides in the nucleus. The protein localises to the nucleolus. Its function is as follows. Non-catalytic subunit of the tRNA-splicing endonuclease complex, a complex responsible for identification and cleavage of the splice sites in pre-tRNA. It cleaves pre-tRNA at the 5' and 3' splice sites to release the intron. The products are an intron and two tRNA half-molecules bearing 2',3' cyclic phosphate and 5'-OH termini. There are no conserved sequences at the splice sites, but the intron is invariably located at the same site in the gene, placing the splice sites an invariant distance from the constant structural features of the tRNA body. The tRNA splicing endonuclease is also involved in mRNA processing via its association with pre-mRNA 3'-end processing factors, establishing a link between pre-tRNA splicing and pre-mRNA 3'-end formation, suggesting that the endonuclease subunits function in multiple RNA-processing events. The protein is tRNA-splicing endonuclease subunit Sen15 (TSEN15) of Homo sapiens (Human).